Here is a 161-residue protein sequence, read N- to C-terminus: Nucleotide-binding protein Bxeno_A3642 (161 aa).

It belongs to the YajQ family.

Functionally, nucleotide-binding protein. The protein is Nucleotide-binding protein Bxeno_A3642 of Paraburkholderia xenovorans (strain LB400).